The sequence spans 405 residues: NADH-quinone oxidoreductase subunit D (405 aa).

Belongs to the complex I 49 kDa subunit family. As to quaternary structure, NDH-1 is composed of 14 different subunits. Subunits NuoB, C, D, E, F, and G constitute the peripheral sector of the complex.

Its subcellular location is the cell inner membrane. The enzyme catalyses a quinone + NADH + 5 H(+)(in) = a quinol + NAD(+) + 4 H(+)(out). Its function is as follows. NDH-1 shuttles electrons from NADH, via FMN and iron-sulfur (Fe-S) centers, to quinones in the respiratory chain. The immediate electron acceptor for the enzyme in this species is believed to be ubiquinone. Couples the redox reaction to proton translocation (for every two electrons transferred, four hydrogen ions are translocated across the cytoplasmic membrane), and thus conserves the redox energy in a proton gradient. This chain is NADH-quinone oxidoreductase subunit D, found in Ruegeria pomeroyi (strain ATCC 700808 / DSM 15171 / DSS-3) (Silicibacter pomeroyi).